Reading from the N-terminus, the 663-residue chain is Meiotically up-regulated gene 60 protein (663 aa).

Residues 578 to 644 enclose the KH domain; that stretch reads PAEMHFYVPE…SENLWAVRSL (67 aa).

It localises to the cytoplasm. The protein resides in the nucleus. Its subcellular location is the cytoskeleton. The protein localises to the microtubule organizing center. It is found in the spindle pole body. In terms of biological role, has a role in meiosis. In Schizosaccharomyces pombe (strain 972 / ATCC 24843) (Fission yeast), this protein is Meiotically up-regulated gene 60 protein (mug60).